Here is a 66-residue protein sequence, read N- to C-terminus: Large ribosomal subunit protein bL35 (66 aa).

This sequence belongs to the bacterial ribosomal protein bL35 family.

The protein is Large ribosomal subunit protein bL35 of Caulobacter sp. (strain K31).